The primary structure comprises 1620 residues: ABC-type organic anion transporter ABCA8B (1620 aa).

7 helical membrane-spanning segments follow: residues 30–50 (SLME…YPHG), 223–243 (FFIF…SINV), 267–287 (SWGL…ALVI), 298–318 (FMVV…LAFL), 326–346 (SVLT…LGFT), 352–372 (LPAP…TLGM), and 396–416 (LIIA…ALMM). An ABC transporter 1 domain is found at 479–714 (IRIRNISKEY…WGVGYHLSLQ (236 aa)). An ATP-binding site is contributed by 515–522 (GHSGAGKS). A glycan (N-linked (GlcNAc...) asparagine) is linked at asparagine 723. The next 8 membrane-spanning stretches (helical) occupy residues 860-880 (TLLS…FENI), 979-999 (CFPV…KPSA), 1023-1043 (TAFW…SSVT), 1069-1089 (MVDI…DYLF), 1105-1125 (IPCS…ISFI), 1135-1155 (IWSL…LLAF), 1164-1184 (IIFL…LHLF), and 1194-1214 (VIEP…FIFT). The region spanning 1283–1516 (LRKEYAGKQK…FGKDYLLEMK (234 aa)) is the ABC transporter 2 domain. 1321-1328 (GHNGAGKS) lines the ATP pocket.

This sequence belongs to the ABC transporter superfamily. ABCA family. Expressed in heart, brain, lung, liver and skeletal muscle. Highly expressed in the liver, and is also abundant in heart and skeletal muscle. Highly expressed in liver.

It localises to the cell membrane. It is found in the basolateral cell membrane. The enzyme catalyses taurocholate(in) + ATP + H2O = taurocholate(out) + ADP + phosphate + H(+). The catalysed reaction is cholesterol(in) + ATP + H2O = cholesterol(out) + ADP + phosphate + H(+). Cholesterol efflux is increased by extracellularly applied taurocholate. In terms of biological role, mediates cholesterol and taurocholate efflux. Through the interaction with ABCA1 potentiates the cholesterol efflux to lipid-free APOA1, in turn regulates high-density lipoprotein cholesterol levels. In Mus musculus (Mouse), this protein is ABC-type organic anion transporter ABCA8B.